The sequence spans 293 residues: Proline iminopeptidase (293 aa).

The region spanning 28 to 277 (PLVLLHGGPG…NCGHMSFVEK (250 aa)) is the AB hydrolase-1 domain. The active-site Nucleophile is S105. D244 is a catalytic residue. Catalysis depends on H271, which acts as the Proton donor.

It belongs to the peptidase S33 family.

Its subcellular location is the cell envelope. It carries out the reaction Release of N-terminal proline from a peptide.. In terms of biological role, releases the N-terminal proline from various substrates. This chain is Proline iminopeptidase, found in Lactobacillus crispatus (strain ST1).